Reading from the N-terminus, the 268-residue chain is Interleukin-1 alpha (268 aa).

Positions 1–112 (MAKVPDLFED…NTEEEIIKPR (112 aa)) are excised as a propeptide. An N6-acetyllysine modification is found at Lys82. Positions 82-86 (KKRRL) are nuclear localization signal (NLS). Residue Ser87 is modified to Phosphoserine. N-linked (GlcNAc...) asparagine glycosylation is found at Asn102 and Asn141.

The protein belongs to the IL-1 family. As to quaternary structure, monomer. Interacts with TMED10; the interaction mediates the translocation from the cytoplasm into the ERGIC (endoplasmic reticulum-Golgi intermediate compartment) and thereby secretion. Interacts with IL1R1. Interacts with S100A13; this interaction is the first step in the export of IL1A, followed by direct translocation of this complex across the plasma membrane. In terms of processing, acetylated within its nuclear localization sequence, which impacts subcellular localization. Post-translationally, proteolytic processed by CAPN1 in a calcium-dependent manner. Cleavage from 31 kDa precursor to 18 kDa biologically active molecules. Phosphorylated. Phosphorylation greatly enhances susceptibility to digestion and promotes the conversion of pre-IL1A alpha to the biologically active IL1A.

Its subcellular location is the nucleus. The protein resides in the cytoplasm. The protein localises to the secreted. Functionally, cytokine constitutively present intracellularly in nearly all resting non-hematopoietic cells that plays an important role in inflammation and bridges the innate and adaptive immune systems. After binding to its receptor IL1R1 together with its accessory protein IL1RAP, forms the high affinity interleukin-1 receptor complex. Signaling involves the recruitment of adapter molecules such as MYD88, IRAK1 or IRAK4. In turn, mediates the activation of NF-kappa-B and the three MAPK pathways p38, p42/p44 and JNK pathways. Within the cell, acts as an alarmin and cell death results in its liberation in the extracellular space after disruption of the cell membrane to induce inflammation and alert the host to injury or damage. In addition to its role as a danger signal, which occurs when the cytokine is passively released by cell necrosis, directly senses DNA damage and acts as signal for genotoxic stress without loss of cell integrity. This is Interleukin-1 alpha (IL1A) from Bos taurus (Bovine).